Here is a 637-residue protein sequence, read N- to C-terminus: Sodium-dependent phosphate transport protein 2A (637 aa).

The Cytoplasmic segment spans residues 1 to 103 (MMSYSERLGG…LAQVGTKLLK (103 aa)). Phosphoserine is present on residues Ser-14 and Ser-34. A helical transmembrane segment spans residues 104–125 (VPLMLAFLYLFVCSLDVLSSAF). Topologically, residues 126–145 (QLAGGKVAGDIFKDNAILSN) are extracellular. Residues 146 to 163 (PVAGLVVGILVTVLVQSS) form a helical membrane-spanning segment. Topologically, residues 164–165 (ST) are cytoplasmic. The helical transmembrane segment at 166–185 (STSIIVSMVSSGLLEVSSAI) threads the bilayer. The Extracellular segment spans residues 186 to 345 (PIIMGSNIGT…HIFVDTGLPD (160 aa)). Intrachain disulfides connect Cys-225–Cys-520 and Cys-306–Cys-334. Residues Asn-298 and Asn-328 are each glycosylated (N-linked (GlcNAc...) asparagine). Residues 346-368 (LAVGLILLAGSLVVLCTCLILLV) form a helical membrane-spanning segment. The Cytoplasmic portion of the chain corresponds to 369–410 (KMLNSLLKGQVMSSRRSSTQTDFPAPFTWVTGYFAMVVGASM). A helical membrane pass occupies residues 411–434 (TFVVQSSSVFTSAITPLIGLGVIS). The Extracellular segment spans residues 435–464 (IERAYPLTLGSNIGTTTTAILAALASPREK). A helical membrane pass occupies residues 465–485 (LSSSFQIALCHFFFNISGILL). Over 486 to 511 (WYPLPCTRLPIRMAKALGKRTAKYRW) the chain is Cytoplasmic. A Phosphothreonine; by PKC modification is found at Thr-506. Residues 512 to 532 (FAVLYLLVCFLLLPSLVFGIS) form a helical membrane-spanning segment. Over 533–537 (MAGWQ) the chain is Extracellular. The helical transmembrane segment at 538 to 559 (AMVGVGTPFGALLAFVVLVNVL) threads the bilayer. The Cytoplasmic segment spans residues 560-637 (QSRSPGHLPK…LPAHHNATRL (78 aa)). Ser-605 bears the Phosphoserine mark. A Phosphothreonine modification is found at Thr-621. Phosphoserine is present on Ser-623.

The protein belongs to the SLC34A transporter family. In terms of assembly, interacts via its C-terminal region with NHERF4. Interacts with NHERF1. Interacts with TMEM174; regulates SLC34A1 internalization by PTH and FGF23. Kidney.

It localises to the apical cell membrane. It is found in the cell membrane. The enzyme catalyses 3 Na(+)(out) + phosphate(out) = 3 Na(+)(in) + phosphate(in). Its function is as follows. Involved in actively transporting phosphate into cells via Na(+) cotransport in the renal brush border membrane. The cotransport has a Na(+):Pi stoichiometry of 3:1 and is electrogenic. This is Sodium-dependent phosphate transport protein 2A from Mus musculus (Mouse).